The primary structure comprises 439 residues: 23S rRNA (uracil(1939)-C(5))-methyltransferase RlmD (439 aa).

Positions 1–54 (MTAPVLIESLDQEGRGVAHAEGKVIFIEGALPGEVVTYNAYRRKPSFELAQVGQ) constitute a TRAM domain. [4Fe-4S] cluster contacts are provided by C67, C73, C76, and C155. Q264, F293, N298, E314, N342, and D363 together coordinate S-adenosyl-L-methionine. C391 serves as the catalytic Nucleophile.

This sequence belongs to the class I-like SAM-binding methyltransferase superfamily. RNA M5U methyltransferase family. RlmD subfamily.

The catalysed reaction is uridine(1939) in 23S rRNA + S-adenosyl-L-methionine = 5-methyluridine(1939) in 23S rRNA + S-adenosyl-L-homocysteine + H(+). Its function is as follows. Catalyzes the formation of 5-methyl-uridine at position 1939 (m5U1939) in 23S rRNA. This Nitrosospira multiformis (strain ATCC 25196 / NCIMB 11849 / C 71) protein is 23S rRNA (uracil(1939)-C(5))-methyltransferase RlmD.